The following is a 601-amino-acid chain: Elongation factor 4 (601 aa).

The 183-residue stretch at 6–188 (SHIRNFSIIA…QIVHRVPAPE (183 aa)) folds into the tr-type G domain. Residues 18 to 23 (DHGKST) and 135 to 138 (NKID) contribute to the GTP site.

The protein belongs to the TRAFAC class translation factor GTPase superfamily. Classic translation factor GTPase family. LepA subfamily.

Its subcellular location is the cell inner membrane. It catalyses the reaction GTP + H2O = GDP + phosphate + H(+). Functionally, required for accurate and efficient protein synthesis under certain stress conditions. May act as a fidelity factor of the translation reaction, by catalyzing a one-codon backward translocation of tRNAs on improperly translocated ribosomes. Back-translocation proceeds from a post-translocation (POST) complex to a pre-translocation (PRE) complex, thus giving elongation factor G a second chance to translocate the tRNAs correctly. Binds to ribosomes in a GTP-dependent manner. This is Elongation factor 4 from Anaeromyxobacter dehalogenans (strain 2CP-1 / ATCC BAA-258).